Reading from the N-terminus, the 198-residue chain is Na(+)-translocating NADH-quinone reductase subunit E (198 aa).

Helical transmembrane passes span 11–31, 35–55, 77–97, 110–130, 140–160, and 176–196; these read SVFIENMALSFFLGMCTFLAV, VSTAFGLGIAVIVVLGIAVPV, FLNFITFIGVIAALVQILEMV, GIFLPLITVNCAIFGGVSFMV, VVYGIGAGTGWMLAIVALAGI, and LGITFITVGLMALGFMSFSGI.

The protein belongs to the NqrDE/RnfAE family. Composed of six subunits; NqrA, NqrB, NqrC, NqrD, NqrE and NqrF.

The protein resides in the cell inner membrane. The enzyme catalyses a ubiquinone + n Na(+)(in) + NADH + H(+) = a ubiquinol + n Na(+)(out) + NAD(+). Its function is as follows. NQR complex catalyzes the reduction of ubiquinone-1 to ubiquinol by two successive reactions, coupled with the transport of Na(+) ions from the cytoplasm to the periplasm. NqrA to NqrE are probably involved in the second step, the conversion of ubisemiquinone to ubiquinol. This is Na(+)-translocating NADH-quinone reductase subunit E from Pasteurella multocida (strain Pm70).